We begin with the raw amino-acid sequence, 81 residues long: Short neurotoxin 2 (81 aa).

Positions 1–21 (MKTLLLTLVVVTIVCLDLGYT) are cleaved as a signal peptide. Cystine bridges form between Cys24/Cys43, Cys38/Cys60, Cys62/Cys73, and Cys74/Cys79.

Belongs to the three-finger toxin family. Short-chain subfamily. Type I alpha-neurotoxin sub-subfamily. As to expression, expressed by the venom gland.

The protein localises to the secreted. Binds to muscle nicotinic acetylcholine receptor (nAChR) and inhibit acetylcholine from binding to the receptor, thereby impairing neuromuscular transmission. This is Short neurotoxin 2 from Tropidechis carinatus (Australian rough-scaled snake).